We begin with the raw amino-acid sequence, 345 residues long: UDP-3-O-acylglucosamine N-acyltransferase (345 aa).

The active-site Proton acceptor is His-252.

This sequence belongs to the transferase hexapeptide repeat family. LpxD subfamily. Homotrimer.

It carries out the reaction a UDP-3-O-[(3R)-3-hydroxyacyl]-alpha-D-glucosamine + a (3R)-hydroxyacyl-[ACP] = a UDP-2-N,3-O-bis[(3R)-3-hydroxyacyl]-alpha-D-glucosamine + holo-[ACP] + H(+). It functions in the pathway bacterial outer membrane biogenesis; LPS lipid A biosynthesis. Catalyzes the N-acylation of UDP-3-O-acylglucosamine using 3-hydroxyacyl-ACP as the acyl donor. Is involved in the biosynthesis of lipid A, a phosphorylated glycolipid that anchors the lipopolysaccharide to the outer membrane of the cell. The polypeptide is UDP-3-O-acylglucosamine N-acyltransferase (Rickettsia rickettsii).